The sequence spans 325 residues: GPI-linked NAD(P)(+)--arginine ADP-ribosyltransferase 1 (325 aa).

The first 22 residues, 1 to 22, serve as a signal peptide directing secretion; sequence MKIPAMMSLLLVSVGLRDGVQV. 2 disulfides stabilise this stretch: Cys-53–Cys-272 and Cys-169–Cys-219. Asn-65 carries N-linked (GlcNAc...) asparagine glycosylation. Positions 73 to 268 constitute a TR mART core domain; it reads KVYADGWAQA…IYLRALGKRS (196 aa). NAD(+)-binding residues include Tyr-117 and Arg-174. Catalysis depends on residues Arg-174 and Ser-197. Ser-228 contributes to the NAD(+) binding site. The active site involves Glu-235. Asn-248 carries an N-linked (GlcNAc...) asparagine glycan. The GPI-anchor amidated serine moiety is linked to residue Ser-290. A propeptide spans 291–325 (removed in mature form); that stretch reads APGSISASCSLLLLLLFLVLSALPENPGLQQLTRC.

The protein belongs to the Arg-specific ADP-ribosyltransferase family. In terms of tissue distribution, abundantly expressed in cardiac and skeletal muscle. Low levels also found in lung.

Its subcellular location is the sarcoplasmic reticulum membrane. It carries out the reaction L-arginyl-[protein] + NAD(+) = N(omega)-(ADP-D-ribosyl)-L-arginyl-[protein] + nicotinamide + H(+). In terms of biological role, has ADP-ribosyltransferase activity toward GLP1R. The chain is GPI-linked NAD(P)(+)--arginine ADP-ribosyltransferase 1 (Art1) from Mus musculus (Mouse).